The sequence spans 326 residues: Regulation of nuclear pre-mRNA domain-containing protein 1B (326 aa).

An N-acetylserine modification is found at S2. The CID domain occupies 2–133 (SSFSESALEK…QLKLSMEDSK (132 aa)). Positions 127–149 (LSMEDSKSPPPKATEEKKSLKRT) are disordered. Over residues 128–144 (SMEDSKSPPPKATEEKK) the composition is skewed to basic and acidic residues. A phosphoserine mark is found at S132 and S134. At Y161 the chain carries Phosphotyrosine. 2 positions are modified to phosphoserine: S166 and S299.

This sequence belongs to the UPF0400 (RTT103) family. Homodimer. May form a heterodimer with RPRD1A. Associates with RPAP2. Associates with the RNA polymerase II complex. In terms of tissue distribution, preferentially expressed in a range of tumor tissues including colon, lung, liver, breast, prostate, stomach, uterine endometrium and cervical cancers with higher levels in tumors than in adjacent non-tumor tissue (at protein level).

It is found in the nucleus. In terms of biological role, interacts with phosphorylated C-terminal heptapeptide repeat domain (CTD) of the largest RNA polymerase II subunit POLR2A, and participates in dephosphorylation of the CTD by RPAP2. Transcriptional regulator which enhances expression of CCND1. Promotes binding of RNA polymerase II to the CCDN1 promoter and to the termination region before the poly-A site but decreases its binding after the poly-A site. Prevents RNA polymerase II from reading through the 3' end termination site and may allow it to be recruited back to the promoter through promotion of the formation of a chromatin loop. Also enhances the transcription of a number of other cell cycle-related genes including CDK2, CDK4, CDK6 and cyclin-E but not CDKN1A, CDKN1B or cyclin-A. Promotes cell proliferation. The polypeptide is Regulation of nuclear pre-mRNA domain-containing protein 1B (RPRD1B) (Homo sapiens (Human)).